Reading from the N-terminus, the 210-residue chain is Vacuolar protein sorting-associated protein 28 homolog 2 (210 aa).

The VPS28 N-terminal domain maps to 1 to 99; that stretch reads MMEVKLWNDK…VTSGLPATVE (99 aa). The region spanning 109–205 is the VPS28 C-terminal domain; it reads SNSASIVAEC…SSYNSFMAAL (97 aa).

This sequence belongs to the VPS28 family. Component of the endosomal sorting required for transport complex I (ESCRT-I), composed of ELC, VPS28 and VPS37. Interacts with ELC.

It localises to the endosome. Component of the ESCRT-I complex (endosomal sorting complex required for transport I), a regulator of vesicular trafficking process. Required for the sorting of endocytic ubiquitinated cargos into multivesicular bodies (MVBs). Mediates the association to the ESCRT-0 complex. The polypeptide is Vacuolar protein sorting-associated protein 28 homolog 2 (VPS28-2) (Arabidopsis thaliana (Mouse-ear cress)).